A 141-amino-acid chain; its full sequence is Hemoglobin subunit alpha (141 aa).

The Globin domain occupies 1 to 141 (VLSPADKTNV…VSTVLTSKYR (141 aa)). Ser3 carries the phosphoserine modification. An N6-succinyllysine modification is found at Lys7. Thr8 is subject to Phosphothreonine. Lys11 bears the N6-succinyllysine mark. An N6-acetyllysine; alternate modification is found at Lys16. N6-succinyllysine; alternate is present on Lys16. Tyr24 is subject to Phosphotyrosine. Ser35 bears the Phosphoserine mark. At Lys40 the chain carries N6-succinyllysine. Ser49 carries the phosphoserine modification. Position 58 (His58) interacts with O2. His87 provides a ligand contact to heme b. Ser102 carries the phosphoserine modification. Thr108 carries the post-translational modification Phosphothreonine. Residues Ser124 and Ser131 each carry the phosphoserine modification. Phosphothreonine occurs at positions 134 and 137. Ser138 carries the phosphoserine modification.

The protein belongs to the globin family. Heterotetramer of two alpha chains and two beta chains. In terms of tissue distribution, red blood cells.

Its function is as follows. Involved in oxygen transport from the lung to the various peripheral tissues. Functionally, hemopressin acts as an antagonist peptide of the cannabinoid receptor CNR1. Hemopressin-binding efficiently blocks cannabinoid receptor CNR1 and subsequent signaling. The chain is Hemoglobin subunit alpha (HBA) from Cebus capucinus (White-faced sapajou).